Reading from the N-terminus, the 275-residue chain is Chlorobenzene dihydrodiol dehydrogenase (275 aa).

The Proton acceptor role is filled by Tyr155.

This sequence belongs to the short-chain dehydrogenases/reductases (SDR) family.

It catalyses the reaction (1R,2R)-3-chlorocyclohexa-3,5-diene-1,2-diol + NAD(+) = 3-chlorocatechol + NADH + H(+). It functions in the pathway aromatic compound metabolism. Its function is as follows. Can transform various dihydrodiols of chlorobenzenes and chlorotoluenes into the respective catechols. This Cupriavidus sp. (strain PS12) protein is Chlorobenzene dihydrodiol dehydrogenase.